Reading from the N-terminus, the 360-residue chain is Dual-specificity RNA methyltransferase RlmN (360 aa).

Glu-93 (proton acceptor) is an active-site residue. The 228-residue stretch at 99 to 326 folds into the Radical SAM core domain; the sequence is EEDRNTLCIS…VITRSSRGAD (228 aa). A disulfide bridge links Cys-106 with Cys-331. Residues Cys-113, Cys-117, and Cys-120 each contribute to the [4Fe-4S] cluster site. S-adenosyl-L-methionine-binding positions include 158 to 159, Ser-190, 212 to 214, and Asn-288; these read GE and SLN. The active-site S-methylcysteine intermediate is the Cys-331.

This sequence belongs to the radical SAM superfamily. RlmN family. Requires [4Fe-4S] cluster as cofactor.

The protein resides in the cytoplasm. The enzyme catalyses adenosine(2503) in 23S rRNA + 2 reduced [2Fe-2S]-[ferredoxin] + 2 S-adenosyl-L-methionine = 2-methyladenosine(2503) in 23S rRNA + 5'-deoxyadenosine + L-methionine + 2 oxidized [2Fe-2S]-[ferredoxin] + S-adenosyl-L-homocysteine. It carries out the reaction adenosine(37) in tRNA + 2 reduced [2Fe-2S]-[ferredoxin] + 2 S-adenosyl-L-methionine = 2-methyladenosine(37) in tRNA + 5'-deoxyadenosine + L-methionine + 2 oxidized [2Fe-2S]-[ferredoxin] + S-adenosyl-L-homocysteine. Functionally, specifically methylates position 2 of adenine 2503 in 23S rRNA and position 2 of adenine 37 in tRNAs. m2A2503 modification seems to play a crucial role in the proofreading step occurring at the peptidyl transferase center and thus would serve to optimize ribosomal fidelity. This chain is Dual-specificity RNA methyltransferase RlmN, found in Geobacter sulfurreducens (strain ATCC 51573 / DSM 12127 / PCA).